A 360-amino-acid polypeptide reads, in one-letter code: Peptide chain release factor 1 (360 aa).

N5-methylglutamine is present on Gln235.

It belongs to the prokaryotic/mitochondrial release factor family. Post-translationally, methylated by PrmC. Methylation increases the termination efficiency of RF1.

The protein localises to the cytoplasm. Its function is as follows. Peptide chain release factor 1 directs the termination of translation in response to the peptide chain termination codons UAG and UAA. The sequence is that of Peptide chain release factor 1 from Burkholderia cenocepacia (strain ATCC BAA-245 / DSM 16553 / LMG 16656 / NCTC 13227 / J2315 / CF5610) (Burkholderia cepacia (strain J2315)).